The chain runs to 751 residues: Semaphorin-3C (751 aa).

Residues 1–20 (MAFRAICVLVGVFICSICVR) form the signal peptide. The 484-residue stretch at 28–511 (RVYLTFDELR…SNEGVSQVSL (484 aa)) folds into the Sema domain. Residue Asn-81 is glycosylated (N-linked (GlcNAc...) asparagine). Cys-101 and Cys-112 are oxidised to a cystine. N-linked (GlcNAc...) asparagine glycosylation is present at Asn-123. Cysteines 130 and 139 form a disulfide. Residues Asn-252 and Asn-268 are each glycosylated (N-linked (GlcNAc...) asparagine). Disulfide bonds link Cys-266–Cys-378 and Cys-290–Cys-338. Asn-465 is a glycosylation site (N-linked (GlcNAc...) asparagine). A disulfide bond links Cys-514 and Cys-532. Residues 571–655 (AYRNAAEIVQ…TENSFKQTIA (85 aa)) enclose the Ig-like C2-type domain. 2 N-linked (GlcNAc...) asparagine glycosylation sites follow: Asn-585 and Asn-586. Cys-643 and Cys-709 are oxidised to a cystine.

Belongs to the semaphorin family. Interacts with PLXND1.

It localises to the secreted. Its function is as follows. Binds to plexin family members and plays an important role in the regulation of developmental processes. Required for normal cardiovascular development during embryogenesis. Functions as attractant for growing axons, and thereby plays an important role in axon growth and axon guidance. This is Semaphorin-3C (Sema3c) from Mus musculus (Mouse).